The following is a 199-amino-acid chain: Nucleoid occlusion factor SlmA (199 aa).

Positions 10–71 (RNRREEILQA…SLIEFIEDSL (62 aa)) constitute an HTH tetR-type domain. Positions 34–53 (TTAKLAANVGVSEAALYRHF) form a DNA-binding region, H-T-H motif. Residues 120–140 (NRLQGRINQLFERIEVQIRQV) adopt a coiled-coil conformation.

Belongs to the nucleoid occlusion factor SlmA family. Homodimer. Interacts with FtsZ.

Its subcellular location is the cytoplasm. It is found in the nucleoid. In terms of biological role, required for nucleoid occlusion (NO) phenomenon, which prevents Z-ring formation and cell division over the nucleoid. Acts as a DNA-associated cell division inhibitor that binds simultaneously chromosomal DNA and FtsZ, and disrupts the assembly of FtsZ polymers. SlmA-DNA-binding sequences (SBS) are dispersed on non-Ter regions of the chromosome, preventing FtsZ polymerization at these regions. The polypeptide is Nucleoid occlusion factor SlmA (Photorhabdus laumondii subsp. laumondii (strain DSM 15139 / CIP 105565 / TT01) (Photorhabdus luminescens subsp. laumondii)).